The sequence spans 808 residues: Probable mannosyl-oligosaccharide glucosidase (808 aa).

At 1-11 (MVSDMLGGNKR) the chain is on the cytoplasmic side. Residues 12 to 31 (WILFGLLSFLLNCVLVSCSV) traverse the membrane as a helical; Signal-anchor for type II membrane protein segment. At 32–808 (EDIEKAANDS…LVVNIMSENY (777 aa)) the chain is on the lumenal side. Residue asparagine 39 is glycosylated (N-linked (GlcNAc...) asparagine). Aspartate 580 acts as the Proton donor in catalysis. The active-site Proton acceptor is glutamate 778.

The protein belongs to the glycosyl hydrolase 63 family.

It is found in the endoplasmic reticulum membrane. It carries out the reaction N(4)-(alpha-D-Glc-(1-&gt;2)-alpha-D-Glc-(1-&gt;3)-alpha-D-Glc-(1-&gt;3)-alpha-D-Man-(1-&gt;2)-alpha-D-Man-(1-&gt;2)-alpha-D-Man-(1-&gt;3)-[alpha-D-Man-(1-&gt;2)-alpha-D-Man-(1-&gt;3)-[alpha-D-Man-(1-&gt;2)-alpha-D-Man-(1-&gt;6)]-alpha-D-Man-(1-&gt;6)]-beta-D-Man-(1-&gt;4)-beta-D-GlcNAc-(1-&gt;4)-beta-D-GlcNAc)-L-asparaginyl-[protein] + H2O = N(4)-(alpha-D-Glc-(1-&gt;3)-alpha-D-Glc-(1-&gt;3)-alpha-D-Man-(1-&gt;2)-alpha-D-Man-(1-&gt;2)-alpha-D-Man-(1-&gt;3)-[alpha-D-Man-(1-&gt;2)-alpha-D-Man-(1-&gt;3)-[alpha-D-Man-(1-&gt;2)-alpha-D-Man-(1-&gt;6)]-alpha-D-Man-(1-&gt;6)]-beta-D-Man-(1-&gt;4)-beta-D-GlcNAc-(1-&gt;4)-beta-D-GlcNAc)-L-asparaginyl-[protein] + beta-D-glucose. Its function is as follows. Cleaves the distal alpha 1,2-linked glucose residue from the Glc(3)Man(9)GlcNAc(2) oligosaccharide precursor highly specifically. In Schizosaccharomyces pombe (strain 972 / ATCC 24843) (Fission yeast), this protein is Probable mannosyl-oligosaccharide glucosidase.